The chain runs to 369 residues: MKYKRIVFKVGTSSLTNEDGSLSRSKVKDITQQLAMLHEAGHELILVSSGAIAAGFGALGFKKRPTKIADKQASAAVGQGLLLEEYTTNLLLRQIVSAQILLTQDDFVDKRRYKNAHQALSVLLNRGAIPIINENDSVVIDELKVGDNDTLSAQVAAMVQADLLVFLTDVDGLYTGNPNSDPRAKRLERIETINREIIDMAGGAGSSNGTGGMLTKIKAATIATESGVPVYICSSLKSDSMIEAAEETEDGSYFVAQEKGLRTQKQWLAFYAQSQGSIWVDKGAAEALSQHGKSLLLSGIVEAEGVFSYGDIVTVFDKESGKSLGKGRVQFGASALEDILRSQKAKGVLIYRDDWISITPEIQLLFTEF.

Lys-9 contributes to the ATP binding site. Ser-49, Asp-136, and Asn-148 together coordinate substrate. ATP contacts are provided by residues 168–169 (TD) and 210–216 (TGGMLTK). The PUA domain occupies 275-355 (QGSIWVDKGA…KGVLIYRDDW (81 aa)).

The protein belongs to the glutamate 5-kinase family.

Its subcellular location is the cytoplasm. The enzyme catalyses L-glutamate + ATP = L-glutamyl 5-phosphate + ADP. Its pathway is amino-acid biosynthesis; L-proline biosynthesis; L-glutamate 5-semialdehyde from L-glutamate: step 1/2. Functionally, catalyzes the transfer of a phosphate group to glutamate to form L-glutamate 5-phosphate. This chain is Glutamate 5-kinase, found in Streptococcus pneumoniae serotype 2 (strain D39 / NCTC 7466).